The sequence spans 339 residues: Retinol dehydrogenase 10-A (339 aa).

The helical; Signal-anchor transmembrane segment at 3 to 23 threads the bilayer; it reads IFVEFFLVMLKVCWAIVMAGF. 40–64 provides a ligand contact to NADP(+); sequence VITGAGGGLGRLFAKEFARRRATLV. Ser195 provides a ligand contact to substrate. The Proton acceptor role is filled by Tyr208.

Belongs to the short-chain dehydrogenases/reductases (SDR) family.

It is found in the microsome membrane. The protein resides in the endoplasmic reticulum membrane. It carries out the reaction all-trans-retinol + NADP(+) = all-trans-retinal + NADPH + H(+). Its pathway is cofactor metabolism; retinol metabolism. Retinol dehydrogenase with a clear preference for NADP. Converts all-trans-retinol to all-trans-retinal. Has no detectable activity towards 11-cis-retinol, 9-cis-retinol and 13-cis-retinol. The chain is Retinol dehydrogenase 10-A (rdh10a) from Danio rerio (Zebrafish).